Reading from the N-terminus, the 548-residue chain is MHPDDDPYADDGSGRLFWADAAADRVLDGDPEEPIVIKGGISPSGVPHLGNMNEIMRGYFVAAVLRERGHEVRQVFTSDDRDPLRGLPRKLADLDGEVVALGDVNAGALGQNLGAPYTEIPDPFGCCDSYGAHFSNLIQSSADRLGVDVEMVSNTETYANGGFEEVTRYLLEHVTAARDVLGEYQDKVDEEYVPFNPICEACGKVTETVTDVDADAGTVEYVCTDMDAGDQTIEGCGHEGTATLREGKLPWRFEWPAQWRTLGVDYEPFGKDHAEGSWPSGTDISRNVLGDEPPTPMVYEWFTLDGEPFSSSAGHVILVQDVLALLELPVVRYFFSKDPRRARDFSIEHLDQLVDEFDRMERVYFGEAADASEDERERAARVYPLLVDDIDADRVRIPFTFAAVLGMTEDSALREEIARREGHIPADADADTVADALTRVERAREWARRTNNEFNYRLARAEIPAHDFDDATAAALDELAAFLDDEDPDGEALQGEIYEAAKRHDIDIGAFFAAGYRLFFDEDQGPKLGPFLAKLDREFVVTRLRREG.

Residues 43–51 carry the 'HIGH' region motif; the sequence is PSGVPHLGN. The 'KMSKS' region motif lies at 308-312; the sequence is PFSSS.

This sequence belongs to the class-I aminoacyl-tRNA synthetase family.

Its subcellular location is the cytoplasm. It carries out the reaction tRNA(Lys) + L-lysine + ATP = L-lysyl-tRNA(Lys) + AMP + diphosphate. The sequence is that of Lysine--tRNA ligase from Halobacterium salinarum (strain ATCC 700922 / JCM 11081 / NRC-1) (Halobacterium halobium).